We begin with the raw amino-acid sequence, 432 residues long: Enolase (432 aa).

Residue glutamine 163 participates in (2R)-2-phosphoglycerate binding. The Proton donor role is filled by glutamate 205. Residues aspartate 242, glutamate 285, and aspartate 312 each contribute to the Mg(2+) site. Lysine 337, arginine 366, serine 367, and lysine 388 together coordinate (2R)-2-phosphoglycerate. The active-site Proton acceptor is lysine 337.

It belongs to the enolase family. The cofactor is Mg(2+).

The protein resides in the cytoplasm. It is found in the secreted. It localises to the cell surface. It carries out the reaction (2R)-2-phosphoglycerate = phosphoenolpyruvate + H2O. It functions in the pathway carbohydrate degradation; glycolysis; pyruvate from D-glyceraldehyde 3-phosphate: step 4/5. Catalyzes the reversible conversion of 2-phosphoglycerate (2-PG) into phosphoenolpyruvate (PEP). It is essential for the degradation of carbohydrates via glycolysis. This Bifidobacterium adolescentis (strain ATCC 15703 / DSM 20083 / NCTC 11814 / E194a) protein is Enolase.